Here is a 238-residue protein sequence, read N- to C-terminus: Thiamine import ATP-binding protein ThiQ (238 aa).

In terms of domain architecture, ABC transporter spans 2 to 230; the sequence is LALDKVRYEY…HPHPELAQFV (229 aa). Position 32 to 39 (32 to 39) interacts with ATP; sequence GPSGAGKS.

This sequence belongs to the ABC transporter superfamily. Thiamine importer (TC 3.A.1.19.1) family. As to quaternary structure, the complex is composed of two ATP-binding proteins (ThiQ), two transmembrane proteins (ThiP) and a solute-binding protein (ThiB).

The protein resides in the cell inner membrane. The enzyme catalyses thiamine(out) + ATP + H2O = thiamine(in) + ADP + phosphate + H(+). Functionally, part of the ABC transporter complex ThiBPQ involved in thiamine import. Responsible for energy coupling to the transport system. This chain is Thiamine import ATP-binding protein ThiQ, found in Vibrio cholerae serotype O1 (strain ATCC 39315 / El Tor Inaba N16961).